The sequence spans 383 residues: Insecticidal crystal protein Cry35Ab1 (383 aa).

The region spanning 26 to 138 (DDSGVSLMNK…NNPNQQWNLT (113 aa)) is the Ricin B-type lectin domain.

It belongs to the toxin_10 family. Monomer in solution. Copurifies from parasporal inclusion bodies with Cry34Ab1. Post-translationally, proteolytic processing occurs near the C-terminus yielding a stable protein of approximately 40 kDa; this may be the active form of the protein.

Functionally, component of a binary insecticidal toxin active on western corn rootworm (WCR, Diabrotica virgifera subsp. virgifera Le Conte) and probably also on northern corn rootworm (D.barberi). Both proteins are required for maximal toxicity. The larval midgut epithelium is probably the primary target. This protein alone has no activity against southern corn rootworm (Diabrotica undecimpunctata howardi Barber), but it synergizes the toxic effect of its Cry34Ab1 partner. The 2 proteins individually and together form ion channels; channels made in the presence of the 2 proteins have higher conductance. Binds to WCR third instar midgut brush border membrane vesicles; binding improves over 10-fold in the presence of Cry34Ab1. This Bacillus thuringiensis protein is Insecticidal crystal protein Cry35Ab1.